The sequence spans 355 residues: WAT1-related protein At1g25270 (355 aa).

10 helical membrane-spanning segments follow: residues 4 to 24 (VVAM…FKIT), 33 to 53 (VLVA…ALIF), 65 to 85 (LLLL…ILYL), 94 to 114 (TFSA…GLVF), 134 to 154 (LLGA…IHIW), 175 to 195 (VSIL…LWLL), 207 to 227 (LYWN…IIAL), 244 to 264 (LLAT…LVAW), 272 to 292 (LFVT…GSFA), and 297 to 317 (LHLG…LVVW). In terms of domain architecture, EamA 1 spans 12-142 (FIFAGMFILF…TLLGACGALV (131 aa)). The EamA 2 domain occupies 210–316 (NTSLMNGVGS…IMVGGVYLVV (107 aa)).

This sequence belongs to the drug/metabolite transporter (DMT) superfamily. Plant drug/metabolite exporter (P-DME) (TC 2.A.7.4) family.

The protein resides in the membrane. The chain is WAT1-related protein At1g25270 from Arabidopsis thaliana (Mouse-ear cress).